Consider the following 320-residue polypeptide: Dermonecrotic toxin LarSicTox-alphaIB2a (320 aa).

The N-terminal stretch at M1–A15 is a signal peptide. A propeptide spanning residues R16–R41 is cleaved from the precursor. The active site involves H52. Mg(2+)-binding residues include E72 and D74. The Nucleophile role is filled by H88. 2 disulfides stabilise this stretch: C92/C98 and C94/C237. Position 132 (D132) interacts with Mg(2+). A glycan (N-linked (GlcNAc...) asparagine) is linked at N297.

Belongs to the arthropod phospholipase D family. Class II subfamily. Mg(2+) serves as cofactor. Expressed by the venom gland.

The protein resides in the secreted. It catalyses the reaction an N-(acyl)-sphingosylphosphocholine = an N-(acyl)-sphingosyl-1,3-cyclic phosphate + choline. The enzyme catalyses an N-(acyl)-sphingosylphosphoethanolamine = an N-(acyl)-sphingosyl-1,3-cyclic phosphate + ethanolamine. The catalysed reaction is a 1-acyl-sn-glycero-3-phosphocholine = a 1-acyl-sn-glycero-2,3-cyclic phosphate + choline. It carries out the reaction a 1-acyl-sn-glycero-3-phosphoethanolamine = a 1-acyl-sn-glycero-2,3-cyclic phosphate + ethanolamine. Dermonecrotic toxins cleave the phosphodiester linkage between the phosphate and headgroup of certain phospholipids (sphingolipid and lysolipid substrates), forming an alcohol (often choline) and a cyclic phosphate. This toxin acts on sphingomyelin (SM). It may also act on ceramide phosphoethanolamine (CPE), lysophosphatidylcholine (LPC) and lysophosphatidylethanolamine (LPE), but not on lysophosphatidylserine (LPS), and lysophosphatidylglycerol (LPG). It acts by transphosphatidylation, releasing exclusively cyclic phosphate products as second products. Induces dermonecrosis, hemolysis, increased vascular permeability, edema, inflammatory response, and platelet aggregation. The polypeptide is Dermonecrotic toxin LarSicTox-alphaIB2a (Loxosceles arizonica (Arizona brown spider)).